We begin with the raw amino-acid sequence, 266 residues long: Acetyl esterase (266 aa).

This Caldicellulosiruptor saccharolyticus (Caldocellum saccharolyticum) protein is Acetyl esterase (xynC).